A 444-amino-acid chain; its full sequence is Tubulin beta-6 chain (444 aa).

Gln11, Glu69, Ser138, Gly142, Thr143, Gly144, Asn204, and Asn226 together coordinate GTP. Glu69 contacts Mg(2+).

This sequence belongs to the tubulin family. In terms of assembly, dimer of alpha and beta chains. A typical microtubule is a hollow water-filled tube with an outer diameter of 25 nm and an inner diameter of 15 nM. Alpha-beta heterodimers associate head-to-tail to form protofilaments running lengthwise along the microtubule wall with the beta-tubulin subunit facing the microtubule plus end conferring a structural polarity. Microtubules usually have 13 protofilaments but different protofilament numbers can be found in some organisms and specialized cells. The cofactor is Mg(2+). Expressed in roots, leaf sheaths, anthers, and suspension cultured cells.

The protein resides in the cytoplasm. The protein localises to the cytoskeleton. In terms of biological role, tubulin is the major constituent of microtubules, a cylinder consisting of laterally associated linear protofilaments composed of alpha- and beta-tubulin heterodimers. Microtubules grow by the addition of GTP-tubulin dimers to the microtubule end, where a stabilizing cap forms. Below the cap, tubulin dimers are in GDP-bound state, owing to GTPase activity of alpha-tubulin. The polypeptide is Tubulin beta-6 chain (TUBB6) (Oryza sativa subsp. japonica (Rice)).